We begin with the raw amino-acid sequence, 601 residues long: Elongation factor 4 (601 aa).

The 182-residue stretch at 8 to 189 (EQIRNFGIIA…LIVRKAPPPK (182 aa)) folds into the tr-type G domain. Residue 20–25 (DHGKST) participates in GTP binding.

It belongs to the TRAFAC class translation factor GTPase superfamily. Classic translation factor GTPase family. LepA subfamily.

It is found in the cell membrane. The enzyme catalyses GTP + H2O = GDP + phosphate + H(+). In terms of biological role, required for accurate and efficient protein synthesis under certain stress conditions. May act as a fidelity factor of the translation reaction, by catalyzing a one-codon backward translocation of tRNAs on improperly translocated ribosomes. Back-translocation proceeds from a post-translocation (POST) complex to a pre-translocation (PRE) complex, thus giving elongation factor G a second chance to translocate the tRNAs correctly. Binds to ribosomes in a GTP-dependent manner. This Tropheryma whipplei (strain TW08/27) (Whipple's bacillus) protein is Elongation factor 4.